Here is an 852-residue protein sequence, read N- to C-terminus: Protein SEY1 (852 aa).

Over 1 to 738 the chain is Cytoplasmic; sequence MNGHFAAIGN…KRSAIGGITQ (738 aa). Residues 47 to 294 enclose the GB1/RHD3-type G domain; it reads GFNYHLISVF…IPADGLSVYA (248 aa). Residue 57–64 coordinates GTP; sequence GSQSTGKS. The stretch at 475–500 forms a coiled coil; it reads QYKLFEKELDEVSARLRKEEMRRLAI. Residues 739-759 form a helical membrane-spanning segment; it reads VPLYFYVILLILGWNEILMVL. At 760–762 the chain is on the lumenal side; it reads RNP. Residues 763–783 form a helical membrane-spanning segment; sequence FLILLILVMGGGTYIAYSLNL. Over 784-852 the chain is Cytoplasmic; sequence LGPMMQMSNA…AQDISDDDDI (69 aa).

The protein belongs to the TRAFAC class dynamin-like GTPase superfamily. GB1/RHD3 GTPase family. RHD3 subfamily.

The protein localises to the endoplasmic reticulum membrane. Cooperates with the reticulon proteins and tubule-shaping DP1 family proteins to generate and maintain the structure of the tubular endoplasmic reticulum network. Has GTPase activity, which is required for its function in ER organization. This Podospora anserina (strain S / ATCC MYA-4624 / DSM 980 / FGSC 10383) (Pleurage anserina) protein is Protein SEY1.